The chain runs to 336 residues: Ketol-acid reductoisomerase (NADP(+)) (336 aa).

One can recognise a KARI N-terminal Rossmann domain in the interval methionine 1 to threonine 182. Residues tyrosine 25–glutamine 28, arginine 48, serine 51, serine 53, and aspartate 83–glutamine 86 each bind NADP(+). The active site involves histidine 108. Position 134 (glycine 134) interacts with NADP(+). The KARI C-terminal knotted domain occupies threonine 183–leucine 328. Mg(2+) is bound by residues aspartate 191, glutamate 195, glutamate 227, and glutamate 231. Serine 252 provides a ligand contact to substrate.

It belongs to the ketol-acid reductoisomerase family. Mg(2+) serves as cofactor.

The enzyme catalyses (2R)-2,3-dihydroxy-3-methylbutanoate + NADP(+) = (2S)-2-acetolactate + NADPH + H(+). It catalyses the reaction (2R,3R)-2,3-dihydroxy-3-methylpentanoate + NADP(+) = (S)-2-ethyl-2-hydroxy-3-oxobutanoate + NADPH + H(+). It functions in the pathway amino-acid biosynthesis; L-isoleucine biosynthesis; L-isoleucine from 2-oxobutanoate: step 2/4. Its pathway is amino-acid biosynthesis; L-valine biosynthesis; L-valine from pyruvate: step 2/4. Functionally, involved in the biosynthesis of branched-chain amino acids (BCAA). Catalyzes an alkyl-migration followed by a ketol-acid reduction of (S)-2-acetolactate (S2AL) to yield (R)-2,3-dihydroxy-isovalerate. In the isomerase reaction, S2AL is rearranged via a Mg-dependent methyl migration to produce 3-hydroxy-3-methyl-2-ketobutyrate (HMKB). In the reductase reaction, this 2-ketoacid undergoes a metal-dependent reduction by NADPH to yield (R)-2,3-dihydroxy-isovalerate. This chain is Ketol-acid reductoisomerase (NADP(+)), found in Thermotoga maritima (strain ATCC 43589 / DSM 3109 / JCM 10099 / NBRC 100826 / MSB8).